A 468-amino-acid chain; its full sequence is MEASHLQIYWHDSQPVYSLTFQKNSANDKLFTAGGDNKVRIWKLNRDENGQNGGVRKIESLDFLGSLTHHEQAINVIRFNSKGDVLASAGDDGQVLLWKQEDPNTQQESVVRPFGMDAETSEADENKEKWVVWKRLRGGSGATAAAEIYDLAWSPDNRNIVVACMDNSIRLFDVGAGMLVCGQSDHGHYVQGVAWDPLNQFILSQSADRSLHVYGVILSSAGVVTGLKLRSKIAKAELPCPGDVLRTNYLFHNETLPSFFRRCSISPCGGLVVIPSGVYKVAGDEVANCVYVYTRSGILNSAGGVKNRPAIRIPSLKKPALMAAFSPVFYETCQKSVLKLPYKLVFAIATTNEVLVYDTDVLEPLCVVGNIHYSPITDLAWSEDGSTLLISSTDGFCSYVSIDTETQFGSRIEPPAMHAEPLDTDESAVAAKNQREAGGIVNMLPVKKIPCNSSDSKKRRIHPTPVDL.

WD repeat units lie at residues 11 to 52 (HDSQ…NGQN), 69 to 108 (HHEQAINVIRFNSKGDVLASAGDDGQVLLWKQEDPNTQQE), 143 to 182 (TAAAEIYDLAWSPDNRNIVVACMDNSIRLFDVGAGMLVCG), 185 to 224 (DHGHYVQGVAWDPLNQFILSQSADRSLHVYGVILSSAGVV), and 371 to 413 (IHYS…SRIE).

The protein belongs to the WD repeat HIR1 family. In terms of assembly, component of chromatin assembly factor 1 (CAF-1), composed of MSI1/p50, CAC2/p60 and CAC1/p90. Interacts with RTT106.

It localises to the nucleus. In terms of biological role, acts as a component of the histone chaperone complex chromatin assembly factor 1 (CAF-1), which assembles histone octamers onto replicating DNA. It performs the first step of the nucleosome assembly process, bringing newly synthesized histones H3 and H4 to replicating DNA; histones H2A/H2B can bind to this chromatin precursor subsequent to DNA replication to complete the histone octamer. Plays a role in the maintenance of heterochromatin. This Saccharomyces cerevisiae (strain ATCC 204508 / S288c) (Baker's yeast) protein is Chromatin assembly factor 1 subunit B (CAC2).